The chain runs to 127 residues: Large ribosomal subunit protein bL12 (127 aa).

Belongs to the bacterial ribosomal protein bL12 family. In terms of assembly, homodimer. Part of the ribosomal stalk of the 50S ribosomal subunit. Forms a multimeric L10(L12)X complex, where L10 forms an elongated spine to which 2 to 4 L12 dimers bind in a sequential fashion. Binds GTP-bound translation factors.

Functionally, forms part of the ribosomal stalk which helps the ribosome interact with GTP-bound translation factors. Is thus essential for accurate translation. The sequence is that of Large ribosomal subunit protein bL12 from Phytoplasma mali (strain AT).